The chain runs to 593 residues: Glutamate decarboxylase 1 (593 aa).

Residues 1–12 (MASSTPSPATSS) show a composition bias toward low complexity. Residues 1-22 (MASSTPSPATSSNAGADPNTTN) form a disordered region. Position 77 is a phosphoserine (Ser-77). 189-191 (QLS) is a 4-aminobutanoate binding site. Lys-404 bears the N6-(pyridoxal phosphate)lysine mark. A 4-aminobutanoate-binding site is contributed by Arg-566.

The protein belongs to the group II decarboxylase family. Homodimer. It depends on pyridoxal 5'-phosphate as a cofactor.

The catalysed reaction is L-glutamate + H(+) = 4-aminobutanoate + CO2. In terms of biological role, catalyzes the synthesis of the inhibitory neurotransmitter gamma-aminobutyric acid (GABA) with pyridoxal 5'-phosphate as cofactor. The protein is Glutamate decarboxylase 1 (Gad1) of Mus musculus (Mouse).